A 324-amino-acid polypeptide reads, in one-letter code: tRNA dimethylallyltransferase (324 aa).

Residue 20 to 27 coordinates ATP; that stretch reads GPTASGKS. Position 22-27 (22-27) interacts with substrate; that stretch reads TASGKS. 3 interaction with substrate tRNA regions span residues 45 to 48, 168 to 172, and 284 to 291; these read DSAL, QRLIR, and KRQITWLR.

The protein belongs to the IPP transferase family. Monomer. Requires Mg(2+) as cofactor.

It carries out the reaction adenosine(37) in tRNA + dimethylallyl diphosphate = N(6)-dimethylallyladenosine(37) in tRNA + diphosphate. Its function is as follows. Catalyzes the transfer of a dimethylallyl group onto the adenine at position 37 in tRNAs that read codons beginning with uridine, leading to the formation of N6-(dimethylallyl)adenosine (i(6)A). The sequence is that of tRNA dimethylallyltransferase from Hydrogenovibrio crunogenus (strain DSM 25203 / XCL-2) (Thiomicrospira crunogena).